Reading from the N-terminus, the 232-residue chain is MAAITALTLRSPVYLPSSATSPRFHGFTNQPPPARLFFPLNPFPSLSIQNPKSIRISASASPITTPILQTEKSTARSSTLTGSTRSLATLAALAIAVTRVLAQKLSLAIQTSSPVIADGLRFSLSTAGPVFFASLRDRPPGYLNTPLTVVAVGIKKWLDIYSGVLMVRVLLSWFPNIPWERQPLSAIRDLCDPYLNLFRNIIPPIFDTLDVSPLLAFAVLGTLGSIVHGSTG.

Residues 1 to 16 constitute a chloroplast transit peptide; that stretch reads MAAITALTLRSPVYLP. The next 2 helical transmembrane spans lie at 147–167 and 201–221; these read LTVVAVGIKKWLDIYSGVLMV and IIPPIFDTLDVSPLLAFAVLG.

Belongs to the YggT family.

It is found in the plastid. The protein localises to the chloroplast thylakoid membrane. Its function is as follows. Required for the proper distribution of nucleoids in chloroplasts. The nucleoid partitioning by YLMG1-1 may be related to chloroplast division processes. This is YlmG homolog protein 1-1, chloroplastic from Arabidopsis thaliana (Mouse-ear cress).